A 370-amino-acid polypeptide reads, in one-letter code: Aminomethyltransferase (370 aa).

This sequence belongs to the GcvT family. The glycine cleavage system is composed of four proteins: P, T, L and H.

The catalysed reaction is N(6)-[(R)-S(8)-aminomethyldihydrolipoyl]-L-lysyl-[protein] + (6S)-5,6,7,8-tetrahydrofolate = N(6)-[(R)-dihydrolipoyl]-L-lysyl-[protein] + (6R)-5,10-methylene-5,6,7,8-tetrahydrofolate + NH4(+). The glycine cleavage system catalyzes the degradation of glycine. This chain is Aminomethyltransferase, found in Corynebacterium aurimucosum (strain ATCC 700975 / DSM 44827 / CIP 107346 / CN-1) (Corynebacterium nigricans).